A 101-amino-acid chain; its full sequence is U1-sicaritoxin-Li1a (101 aa).

The N-terminal stretch at 1–19 (MRFLVGAVLVVVLVACATA) is a signal peptide. A propeptide spanning residues 20–35 (FESDAETFKSLVVEER) is cleaved from the precursor. 4 disulfides stabilise this stretch: Cys-37–Cys-54, Cys-45–Cys-59, Cys-53–Cys-72, and Cys-61–Cys-70. A Lysine amide modification is found at Lys-81. The propeptide occupies 85-101 (ALLLPVETHRLLFPEQW).

The protein belongs to the neurotoxin 28 (Litx) family. Expressed by the venom gland.

It is found in the secreted. Toxin active against insects (S.frugiperda larvae). May act on sodium (Nav) or calcium channels (Cav). The chain is U1-sicaritoxin-Li1a from Loxosceles intermedia (Brown spider).